A 125-amino-acid polypeptide reads, in one-letter code: Larval cuticle protein LCP-14 (125 aa).

Residues 1–16 form the signal peptide; sequence MKSFIVALCVVGCVLA. Residues 33–102 enclose the Chitin-binding type R&amp;R domain; it reads EGSYNYAFES…PQADFLPTPP (70 aa).

In terms of biological role, component of the cuticle of the larva of tobacco hornworm. The protein is Larval cuticle protein LCP-14 (LCP-14) of Manduca sexta (Tobacco hawkmoth).